Consider the following 30-residue polypeptide: uncharacterized protein (30 aa).

An N-terminal signal peptide occupies residues M1–S22.

This is an uncharacterized protein from Schizosaccharomyces pombe (strain 972 / ATCC 24843) (Fission yeast).